The chain runs to 211 residues: tRNA (guanine-N(7)-)-methyltransferase (211 aa).

4 residues coordinate S-adenosyl-L-methionine: Glu44, Asp69, Asp96, and Asp118. Asp118 is a catalytic residue. Residue Lys122 participates in substrate binding. Residues Arg124 to Arg129 form an interaction with RNA region. Residues Asp154 and Thr191 to Glu194 each bind substrate.

The protein belongs to the class I-like SAM-binding methyltransferase superfamily. TrmB family.

It catalyses the reaction guanosine(46) in tRNA + S-adenosyl-L-methionine = N(7)-methylguanosine(46) in tRNA + S-adenosyl-L-homocysteine. It functions in the pathway tRNA modification; N(7)-methylguanine-tRNA biosynthesis. Functionally, catalyzes the formation of N(7)-methylguanine at position 46 (m7G46) in tRNA. This is tRNA (guanine-N(7)-)-methyltransferase from Streptococcus equi subsp. equi (strain 4047).